The chain runs to 477 residues: Protein kinase C and casein kinase substrate in neurons protein 2 (477 aa).

The region spanning 11–282 is the F-BAR domain; that stretch reads VEVSSDSFWE…AIKSADAMED (272 aa). A coiled-coil region spans residues 25–274; that stretch reads KRTVKRIDDG…SIYRELEYAI (250 aa). Composition is skewed to basic and acidic residues over residues 163-176 and 186-216; these read CKEE…ETNS and QLKK…KDLD. 2 disordered regions span residues 163–218 and 314–412; these read CKEE…LDGT and RREK…PFDE. Over residues 328–341 the composition is skewed to low complexity; sequence GISQSGEQSSIQNQ. Positions 342 to 357 are enriched in polar residues; the sequence is HSSHLSVQSAQSTNNP. An NPF1 motif is present at residues 356–358; it reads NPF. The span at 370–388 shows a compositional bias: basic and acidic residues; the sequence is TENKKIENVGSYEKTHPAE. Over residues 395–407 the composition is skewed to polar residues; that stretch reads NNPFNPSDTNGDN. The short motif at 396–398 is the NPF2 element; sequence NPF. An NPF3 motif is present at residues 408 to 410; it reads NPF. The SH3 domain occupies 417–477; the sequence is TLEVRVRALY…YPANYVESVQ (61 aa).

It belongs to the PACSIN family. Interacts with adam13 through the SH3 domains. Post-translationally, phosphorylated. Ubiquitously expressed with higher expression in the ectoderm, the neuroectoderm, and dorsal mesoderm layers.

Its subcellular location is the cytoplasm. It localises to the cytoskeleton. The protein localises to the cytoplasmic vesicle membrane. The protein resides in the cell projection. It is found in the ruffle membrane. Its subcellular location is the early endosome. It localises to the recycling endosome membrane. The protein localises to the cell membrane. The protein resides in the membrane. It is found in the caveola. Its subcellular location is the cell junction. It localises to the adherens junction. In terms of biological role, regulates the morphogenesis and endocytosis of caveolae. Lipid-binding protein that is able to promote the tubulation of the phosphatidic acid-containing membranes it preferentially binds. Plays a role in intracellular vesicle-mediated transport. Involved in the endocytosis of cell-surface receptors like the EGF receptor, contributing to its internalization in the absence of EGF stimulus. The polypeptide is Protein kinase C and casein kinase substrate in neurons protein 2 (pacsin2) (Xenopus laevis (African clawed frog)).